The primary structure comprises 104 residues: NADH-quinone oxidoreductase subunit K (104 aa).

Helical transmembrane passes span 4-24 (VPAS…LFGA), 31-51 (VIVL…LVAF), and 67-87 (LFTM…LIAL).

The protein belongs to the complex I subunit 4L family. As to quaternary structure, NDH-1 is composed of 14 different subunits. Subunits NuoA, H, J, K, L, M, N constitute the membrane sector of the complex.

The protein localises to the cell membrane. It carries out the reaction a quinone + NADH + 5 H(+)(in) = a quinol + NAD(+) + 4 H(+)(out). In terms of biological role, NDH-1 shuttles electrons from NADH, via FMN and iron-sulfur (Fe-S) centers, to quinones in the respiratory chain. The immediate electron acceptor for the enzyme in this species is believed to be a menaquinone. Couples the redox reaction to proton translocation (for every two electrons transferred, four hydrogen ions are translocated across the cytoplasmic membrane), and thus conserves the redox energy in a proton gradient. The sequence is that of NADH-quinone oxidoreductase subunit K from Bacillus cytotoxicus (strain DSM 22905 / CIP 110041 / 391-98 / NVH 391-98).